Here is a 419-residue protein sequence, read N- to C-terminus: Transcription termination factor Rho (419 aa).

A Rho RNA-BD domain is found at D48–K123. RNA-binding regions lie at residues G61–R66, D78–Y80, and E108–Y110. ATP-binding positions include G169–G174, K181–M186, and R212. Residues V284–G288 are RNA-binding 2.

It belongs to the Rho family. As to quaternary structure, homohexamer. The homohexamer assembles into an open ring structure.

In terms of biological role, facilitates transcription termination by a mechanism that involves Rho binding to the nascent RNA, activation of Rho's RNA-dependent ATPase activity, and release of the mRNA from the DNA template. The chain is Transcription termination factor Rho from Buchnera aphidicola subsp. Baizongia pistaciae (strain Bp).